A 132-amino-acid polypeptide reads, in one-letter code: Small ribosomal subunit protein uS8 (132 aa).

The protein belongs to the universal ribosomal protein uS8 family. In terms of assembly, part of the 30S ribosomal subunit. Contacts proteins S5 and S12.

Its function is as follows. One of the primary rRNA binding proteins, it binds directly to 16S rRNA central domain where it helps coordinate assembly of the platform of the 30S subunit. This chain is Small ribosomal subunit protein uS8, found in Cereibacter sphaeroides (strain ATCC 17025 / ATH 2.4.3) (Rhodobacter sphaeroides).